The chain runs to 152 residues: Large ribosomal subunit protein uL15 (152 aa).

Residues 1–79 are disordered; the sequence is MRLNELSPPP…GRHTPAHPKV (79 aa). Over residues 22-35 the composition is skewed to gly residues; it reads GEGSGYGKTSGRGQ.

It belongs to the universal ribosomal protein uL15 family. Part of the 50S ribosomal subunit.

In terms of biological role, binds to the 23S rRNA. This Rubrobacter xylanophilus (strain DSM 9941 / JCM 11954 / NBRC 16129 / PRD-1) protein is Large ribosomal subunit protein uL15.